Here is a 454-residue protein sequence, read N- to C-terminus: Glutamate mutase epsilon subunit (454 aa).

Residue Arg-67 participates in L-glutamate binding. Adenosylcob(III)alamin is bound at residue Gly-69. Residue Arg-99 coordinates L-glutamate. Asn-122 is an adenosylcob(III)alamin binding site. L-glutamate-binding positions include Arg-148–His-149, Glu-170, and Tyr-176. Pro-179 contacts adenosylcob(III)alamin. Position 180 (Tyr-180) interacts with L-glutamate. Adenosylcob(III)alamin contacts are provided by Phe-296, Lys-325, Glu-329, and Ile-333.

This sequence belongs to the methylaspartate mutase GlmE subunit family. As to quaternary structure, heterotetramer composed of 2 epsilon subunits (GlmE) and 2 sigma subunits (GlmS). GlmE exists as a homodimer and GlmS as a monomer. Requires adenosylcob(III)alamin as cofactor.

The catalysed reaction is (2S,3S)-3-methyl-L-aspartate = L-glutamate. It functions in the pathway amino-acid degradation; L-glutamate degradation via mesaconate pathway; acetate and pyruvate from L-glutamate: step 1/4. Functionally, catalyzes the carbon skeleton rearrangement of L-glutamate to L-threo-3-methylaspartate ((2S,3S)-3-methylaspartate). The sequence is that of Glutamate mutase epsilon subunit from Shigella dysenteriae serotype 1 (strain Sd197).